The primary structure comprises 165 residues: Large ribosomal subunit protein uL15 (165 aa).

Residues 1 to 44 form a disordered region; sequence MSLNQLKAPRGANRAKKRVGRGQGSGLGKTAGRGGKGQKARSGN. Over residues 21 to 37 the composition is skewed to gly residues; the sequence is RGQGSGLGKTAGRGGKG.

Belongs to the universal ribosomal protein uL15 family. As to quaternary structure, part of the 50S ribosomal subunit.

Its function is as follows. Binds to the 23S rRNA. This Anaeromyxobacter dehalogenans (strain 2CP-1 / ATCC BAA-258) protein is Large ribosomal subunit protein uL15.